Here is a 162-residue protein sequence, read N- to C-terminus: Deoxyuridine 5'-triphosphate nucleotidohydrolase (162 aa).

Position 11 is a phosphoserine (serine 11). Residues 83–85, 97–103, glycine 108, arginine 151, and 156–157 each bind dUTP; these read RSG, GVIDEDY, and FG.

The protein belongs to the dUTPase family. As to quaternary structure, homotrimer. Mg(2+) is required as a cofactor. Post-translationally, phosphorylated in vivo on Ser-11, a reaction that can be catalyzed in vitro by CDC2.

The protein resides in the nucleus. The enzyme catalyses dUTP + H2O = dUMP + diphosphate + H(+). It functions in the pathway pyrimidine metabolism; dUMP biosynthesis; dUMP from dCTP (dUTP route): step 2/2. Functionally, catalyzes the cleavage of 2'-deoxyuridine 5'-triphosphate (dUTP) into 2'-deoxyuridine 5'-monophosphate (dUMP) and inorganic pyrophosphate and through its action efficiently prevents uracil misincorporation into DNA and at the same time provides dUMP, the substrate for de novo thymidylate biosynthesis. Inhibits peroxisome proliferator-activated receptor (PPAR) activity by binding of its N-terminal to PPAR, preventing the latter's dimerization with retinoid X receptor. Essential for embryonic development. The polypeptide is Deoxyuridine 5'-triphosphate nucleotidohydrolase (Dut) (Mus musculus (Mouse)).